We begin with the raw amino-acid sequence, 1887 residues long: Bifunctional serine/threonine-protein kinase/NEDD4-like E3 ubiquitin-protein ligase (1887 aa).

Disordered regions lie at residues 19-55 (TPQV…TTNF) and 72-98 (TDNY…TKEN). Low complexity-rich tracts occupy residues 26 to 54 (NNSN…STTN) and 72 to 97 (TDNY…NTKE). RCC1 repeat units lie at residues 206–260 (QGNL…ALTI), 262–314 (GKVY…NNNN), 356–409 (KGLL…VLTN), 411–470 (GLVF…AISD), 472–528 (NDTY…AMSI), and 529–581 (DGSL…IVEK). The tract at residues 299–333 (NNNNNNNNNNSTNNNNNNNNDGAQQQFSLSQNSSS) is disordered. Disordered stretches follow at residues 594–619 (LPSS…SDSN), 823–858 (VLVH…KNGT), and 1030–1088 (DDDN…NNNN). Over residues 825–839 (VHQDEKQQQREKSET) the composition is skewed to basic and acidic residues. Residues 840-852 (ELEEEQDEEEEDS) are compositionally biased toward acidic residues. Positions 1036-1088 (ENNSVNNNSNNNNNNNNNNNNNNNNNNNNNNNIDNNINSNSINDSSNNNNNNN) are enriched in low complexity. A Protein kinase domain is found at 1158-1437 (YDIIKTLSTH…AHQIAVHPYF (280 aa)). ATP contacts are provided by residues 1164 to 1172 (LSTHPHNVY) and lysine 1184. Aspartate 1281 (proton acceptor) is an active-site residue. Positions 1501–1887 (ESNKLFCRLE…LEYVDGFAFI (387 aa)) constitute an HECT domain. Positions 1586 to 1628 (NNNNNNEENNNNNNNNNNNNNNNNNNNNNNNNNNNNNNNNNEE) are disordered. The active-site Glycyl thioester intermediate is the cysteine 1855.

In the N-terminal section; belongs to the protein kinase superfamily. Ser/Thr protein kinase family. The protein in the C-terminal section; belongs to the protein kinase superfamily. CAMK Ser/Thr protein kinase family.

It carries out the reaction L-seryl-[protein] + ATP = O-phospho-L-seryl-[protein] + ADP + H(+). The enzyme catalyses L-threonyl-[protein] + ATP = O-phospho-L-threonyl-[protein] + ADP + H(+). The catalysed reaction is S-ubiquitinyl-[E2 ubiquitin-conjugating enzyme]-L-cysteine + [acceptor protein]-L-lysine = [E2 ubiquitin-conjugating enzyme]-L-cysteine + N(6)-ubiquitinyl-[acceptor protein]-L-lysine.. Its pathway is protein modification; protein ubiquitination. In Dictyostelium discoideum (Social amoeba), this protein is Bifunctional serine/threonine-protein kinase/NEDD4-like E3 ubiquitin-protein ligase.